Reading from the N-terminus, the 316-residue chain is Aspartate carbamoyltransferase catalytic subunit (316 aa).

2 residues coordinate carbamoyl phosphate: R60 and T61. K88 lines the L-aspartate pocket. R110, H138, and Q141 together coordinate carbamoyl phosphate. Residues R171 and R225 each contribute to the L-aspartate site. 2 residues coordinate carbamoyl phosphate: G266 and P267.

The protein belongs to the aspartate/ornithine carbamoyltransferase superfamily. ATCase family. In terms of assembly, heterododecamer (2C3:3R2) of six catalytic PyrB chains organized as two trimers (C3), and six regulatory PyrI chains organized as three dimers (R2).

It catalyses the reaction carbamoyl phosphate + L-aspartate = N-carbamoyl-L-aspartate + phosphate + H(+). It functions in the pathway pyrimidine metabolism; UMP biosynthesis via de novo pathway; (S)-dihydroorotate from bicarbonate: step 2/3. Catalyzes the condensation of carbamoyl phosphate and aspartate to form carbamoyl aspartate and inorganic phosphate, the committed step in the de novo pyrimidine nucleotide biosynthesis pathway. This chain is Aspartate carbamoyltransferase catalytic subunit, found in Rhizorhabdus wittichii (strain DSM 6014 / CCUG 31198 / JCM 15750 / NBRC 105917 / EY 4224 / RW1) (Sphingomonas wittichii).